We begin with the raw amino-acid sequence, 175 residues long: Transcriptional activatory protein BadR (175 aa).

In terms of domain architecture, HTH marR-type spans 20–156 (ANRLFFRLYQ…TLHYLLKILD (137 aa)).

Transcriptional activator of genes for the anaerobic degradation of benzoate. The chain is Transcriptional activatory protein BadR (badR) from Rhodopseudomonas palustris (strain ATCC BAA-98 / CGA009).